A 257-amino-acid chain; its full sequence is Putative hydro-lyase BceJ2315_40370 (257 aa).

The protein belongs to the D-glutamate cyclase family.

In Burkholderia cenocepacia (strain ATCC BAA-245 / DSM 16553 / LMG 16656 / NCTC 13227 / J2315 / CF5610) (Burkholderia cepacia (strain J2315)), this protein is Putative hydro-lyase BceJ2315_40370.